Consider the following 302-residue polypeptide: Elongation factor Ts (302 aa).

The tract at residues 80–83 (TDFV) is involved in Mg(2+) ion dislocation from EF-Tu.

This sequence belongs to the EF-Ts family.

Its subcellular location is the cytoplasm. In terms of biological role, associates with the EF-Tu.GDP complex and induces the exchange of GDP to GTP. It remains bound to the aminoacyl-tRNA.EF-Tu.GTP complex up to the GTP hydrolysis stage on the ribosome. The protein is Elongation factor Ts of Gluconobacter oxydans (strain 621H) (Gluconobacter suboxydans).